The primary structure comprises 173 residues: Cytochrome c-type biogenesis protein CcmE (173 aa).

Residues M1–R8 lie on the Cytoplasmic side of the membrane. Residues F9 to A29 traverse the membrane as a helical; Signal-anchor for type II membrane protein segment. The Periplasmic segment spans residues L30–K173. 2 residues coordinate heme: H131 and Y135. A disordered region spans residues G152 to K173. Positions A156–K173 are enriched in basic and acidic residues.

Belongs to the CcmE/CycJ family.

The protein localises to the cell inner membrane. Its function is as follows. Heme chaperone required for the biogenesis of c-type cytochromes. Transiently binds heme delivered by CcmC and transfers the heme to apo-cytochromes in a process facilitated by CcmF and CcmH. The protein is Cytochrome c-type biogenesis protein CcmE of Haemophilus influenzae (strain PittEE).